Reading from the N-terminus, the 377-residue chain is Histidinol-phosphate aminotransferase (377 aa).

Lysine 232 bears the N6-(pyridoxal phosphate)lysine mark.

The protein belongs to the class-II pyridoxal-phosphate-dependent aminotransferase family. Histidinol-phosphate aminotransferase subfamily. As to quaternary structure, homodimer. Pyridoxal 5'-phosphate is required as a cofactor.

It catalyses the reaction L-histidinol phosphate + 2-oxoglutarate = 3-(imidazol-4-yl)-2-oxopropyl phosphate + L-glutamate. Its pathway is amino-acid biosynthesis; L-histidine biosynthesis; L-histidine from 5-phospho-alpha-D-ribose 1-diphosphate: step 7/9. The chain is Histidinol-phosphate aminotransferase from Mycobacterium sp. (strain KMS).